The following is a 399-amino-acid chain: Tryptophan synthase beta chain (399 aa).

Position 91 is an N6-(pyridoxal phosphate)lysine (Lys-91).

This sequence belongs to the TrpB family. Tetramer of two alpha and two beta chains. Requires pyridoxal 5'-phosphate as cofactor.

It catalyses the reaction (1S,2R)-1-C-(indol-3-yl)glycerol 3-phosphate + L-serine = D-glyceraldehyde 3-phosphate + L-tryptophan + H2O. Its pathway is amino-acid biosynthesis; L-tryptophan biosynthesis; L-tryptophan from chorismate: step 5/5. Its function is as follows. The beta subunit is responsible for the synthesis of L-tryptophan from indole and L-serine. The polypeptide is Tryptophan synthase beta chain (Shouchella clausii (strain KSM-K16) (Alkalihalobacillus clausii)).